Reading from the N-terminus, the 215-residue chain is Large ribosomal subunit protein uL3 (215 aa).

The segment at 136 to 155 (GVSISHRSHGSTGQRQDPGK) is disordered. Position 151 is an N5-methylglutamine (Gln151).

It belongs to the universal ribosomal protein uL3 family. As to quaternary structure, part of the 50S ribosomal subunit. Forms a cluster with proteins L14 and L19. Methylated by PrmB.

In terms of biological role, one of the primary rRNA binding proteins, it binds directly near the 3'-end of the 23S rRNA, where it nucleates assembly of the 50S subunit. This chain is Large ribosomal subunit protein uL3, found in Rickettsia felis (strain ATCC VR-1525 / URRWXCal2) (Rickettsia azadi).